A 947-amino-acid polypeptide reads, in one-letter code: MSWLRFWGPWPLLTWQLLSLLVKEAQPLVWVKDPLQLTSNPLGPPEPWSSRSSHLPWESPHAPAPPAAPGDFDYLGPSASSQMSALPQEPTENLAPFLKELDSAGELPLGPEPFLAAHQDLNDKRTPEERLPEVVPLLNRDQNQALVQLPRLKWVQTTDLDRAAGHQADEILVPLDSKVSRPTKFVVSPKNLKKDLAERWSLPEIVGIPHQLSKPQRQKQTLPDDYLSMDTLYPGSLPPELRVNADEPPGPPEQVGLSQFHLEPKSQNPETLEDIQSSSLQEEAPAQLLQLPQEVEPSTQQEAPALPPESSMESLAQTPLNHEVTVQPPGEDQAHYNLPKFTVKPADVEVTMTSEPKNETESTQAQQEAPIQPPEEAEPSSTALRTTDPPPEHPEVTLPPSDKGQAQHSHLTEATVQPLDLELSITTEPTTEVKPSPTTEETSAQPPDPGLAITPEPTTEIGHSTALEKTRAPHPDQVQTLHRSLTEVTGPPTKLESSQDSLVQSETAPEEQKASTSTNICELCTCGDETLSCVGLSPKQRLRQVPVPEPDTYNGIFTTLNFQGNYISYLDGNVWKAYSWTEKLILSENYLTELPKDSFEGLLYLQYLDLSCNKIRYIERQTFESLPFLQYINLGCNLITKLSLGTFQAWHGMQFLHNLILNRNPLTTVEDPYLFELPALKYLDMGTTHITLTTLKNILTMTVELEKLILPSHMACCLCQFKNSIEAVCKTVKLHCNTACLTNSIHCPEEASVGNPEGAFMKMLQARKQHMSTQLTIESEAPSDSSGINLSGFGGDQLEIQLTEQLRSLIPNEDVRKFMSHVIRTLKMECSETHVQGSCAKLMLRTGLLMKLLSEQQEAKALNVEWDTDQQKTNYINENMEQNEQKEQKSSELMKEVPGDDYKNKLIFAISVTVILIILIIIFCLIEVNSHKRASEKYKDNPSISGA.

An N-terminal signal peptide occupies residues 1–27 (MSWLRFWGPWPLLTWQLLSLLVKEAQP). Residues 28–905 (LVWVKDPLQL…EVPGDDYKNK (878 aa)) are Extracellular-facing. Disordered regions lie at residues 42–88 (LGPP…ALPQ), 226–257 (YLSM…QVGL), 294–458 (EVEP…PEPT), and 484–514 (SLTE…EQKA). The segment covering 311–320 (SMESLAQTPL) has biased composition (polar residues). Asparagine 358 carries N-linked (GlcNAc...) asparagine glycosylation. Composition is skewed to polar residues over residues 404–415 (GQAQHSHLTEAT), 436–445 (SPTTEETSAQ), and 495–507 (LESS…QSET). LRR repeat units follow at residues 556–577 (IFTT…VWKA), 580–601 (WTEK…SFEG), 604–625 (YLQY…TFES), 628–649 (FLQY…TFQA), 655–676 (FLHN…YLFE), and 679–699 (ALKY…KNIL). Asparagine 789 carries N-linked (GlcNAc...) asparagine glycosylation. Residues 867–897 (DTDQQKTNYINENMEQNEQKEQKSSELMKEV) adopt a coiled-coil conformation. A helical transmembrane segment spans residues 906–926 (LIFAISVTVILIILIIIFCLI). Over 927 to 947 (EVNSHKRASEKYKDNPSISGA) the chain is Cytoplasmic.

It localises to the membrane. This is Leucine-rich repeat-containing protein 37B (LRRC37B) from Homo sapiens (Human).